Consider the following 265-residue polypeptide: uncharacterized protein (265 aa).

Residues 233 to 265 (STACGSDQRPTRLPRASCSSRSISGSAARPWKR) form a disordered region. The span at 247-265 (RASCSSRSISGSAARPWKR) shows a compositional bias: low complexity.

This is an uncharacterized protein from Escherichia coli.